A 99-amino-acid chain; its full sequence is Integration host factor subunit alpha (99 aa).

This sequence belongs to the bacterial histone-like protein family. In terms of assembly, heterodimer of an alpha and a beta chain.

In terms of biological role, this protein is one of the two subunits of integration host factor, a specific DNA-binding protein that functions in genetic recombination as well as in transcriptional and translational control. The chain is Integration host factor subunit alpha from Stenotrophomonas maltophilia (strain R551-3).